The chain runs to 433 residues: Succinate--CoA ligase [GDP-forming] subunit beta, mitochondrial (433 aa).

A mitochondrion-targeting transit peptide spans Met-1 to Trp-38. One can recognise an ATP-grasp domain in the interval Lys-47–Phe-275. Gln-58 lines the GTP pocket. Lys-67 carries the N6-acetyllysine; alternate modification. The residue at position 67 (Lys-67) is an N6-succinyllysine; alternate. Lys-74 is subject to N6-acetyllysine. Lys-79 carries the N6-succinyllysine modification. Gly-91–Gly-93 is a GTP binding site. N6-acetyllysine occurs at positions 112, 133, and 140. A GTP-binding site is contributed by Leu-147. Ser-162 bears the Phosphoserine mark. Lys-201 is modified (N6-acetyllysine). Ser-217 is subject to Phosphoserine. Lys-219 and Lys-228 each carry N6-acetyllysine. Residues Asn-244 and Asp-258 each coordinate Mg(2+). Lys-272 is subject to N6-acetyllysine. Asn-309 contributes to the substrate binding site. Lys-339 carries the N6-succinyllysine modification. Lys-348 is subject to N6-acetyllysine. Residue Gly-366 to Val-368 coordinates substrate. N6-acetyllysine occurs at positions 387, 407, and 424.

It belongs to the succinate/malate CoA ligase beta subunit family. GTP-specific subunit beta subfamily. Heterodimer of an alpha and a beta subunit. The beta subunit determines specificity for GTP. The cofactor is Mg(2+).

The protein localises to the mitochondrion. The catalysed reaction is GTP + succinate + CoA = succinyl-CoA + GDP + phosphate. The protein operates within carbohydrate metabolism; tricarboxylic acid cycle; succinate from succinyl-CoA (ligase route): step 1/1. GTP-specific succinyl-CoA synthetase functions in the citric acid cycle (TCA), coupling the hydrolysis of succinyl-CoA to the synthesis of GTP and thus represents the only step of substrate-level phosphorylation in the TCA. The beta subunit provides nucleotide specificity of the enzyme and binds the substrate succinate, while the binding sites for coenzyme A and phosphate are found in the alpha subunit. The protein is Succinate--CoA ligase [GDP-forming] subunit beta, mitochondrial of Mus musculus (Mouse).